A 65-amino-acid chain; its full sequence is Neurotoxin BmK AGAP-SYPU2 (65 aa).

The 63-residue stretch at 2 to 64 folds into the LCN-type CS-alpha/beta domain; sequence KDGYIVDDKN…VPIRVPGRCN (63 aa). Cystine bridges form between cysteine 12–cysteine 63, cysteine 16–cysteine 36, cysteine 22–cysteine 46, and cysteine 26–cysteine 48.

In terms of tissue distribution, expressed by the venom gland.

It is found in the secreted. Alpha toxins bind voltage-independently at site-3 of sodium channels and inhibit the inactivation of the activated channels, thereby blocking neuronal transmission. In vivo, shows analgesic activity (ED(50) is 1.42 mg/kg) and antitumor activity against Ehrlich ascites tumor and S-180 fibrosarcoma models. The protein is Neurotoxin BmK AGAP-SYPU2 of Olivierus martensii (Manchurian scorpion).